A 327-amino-acid chain; its full sequence is Lipoyl synthase (327 aa).

Residues Cys66, Cys71, Cys77, Cys92, Cys96, Cys99, and Ser306 each contribute to the [4Fe-4S] cluster site. A Radical SAM core domain is found at 78 to 295 (FSKGTATFMI…EKEAYELGFT (218 aa)).

It belongs to the radical SAM superfamily. Lipoyl synthase family. It depends on [4Fe-4S] cluster as a cofactor.

The protein resides in the cytoplasm. It carries out the reaction [[Fe-S] cluster scaffold protein carrying a second [4Fe-4S](2+) cluster] + N(6)-octanoyl-L-lysyl-[protein] + 2 oxidized [2Fe-2S]-[ferredoxin] + 2 S-adenosyl-L-methionine + 4 H(+) = [[Fe-S] cluster scaffold protein] + N(6)-[(R)-dihydrolipoyl]-L-lysyl-[protein] + 4 Fe(3+) + 2 hydrogen sulfide + 2 5'-deoxyadenosine + 2 L-methionine + 2 reduced [2Fe-2S]-[ferredoxin]. Its pathway is protein modification; protein lipoylation via endogenous pathway; protein N(6)-(lipoyl)lysine from octanoyl-[acyl-carrier-protein]: step 2/2. In terms of biological role, catalyzes the radical-mediated insertion of two sulfur atoms into the C-6 and C-8 positions of the octanoyl moiety bound to the lipoyl domains of lipoate-dependent enzymes, thereby converting the octanoylated domains into lipoylated derivatives. In Neisseria gonorrhoeae (strain ATCC 700825 / FA 1090), this protein is Lipoyl synthase.